A 115-amino-acid polypeptide reads, in one-letter code: Nitrogenase-stabilizing/protective protein NifW (115 aa).

Belongs to the NifW family. In terms of assembly, homotrimer; associates with NifD.

May protect the nitrogenase Fe-Mo protein from oxidative damage. This Azotobacter vinelandii (strain DJ / ATCC BAA-1303) protein is Nitrogenase-stabilizing/protective protein NifW.